A 287-amino-acid chain; its full sequence is Homoserine kinase (287 aa).

Position 79-89 (79-89) interacts with ATP; the sequence is PLARGLGSSSS.

This sequence belongs to the GHMP kinase family. Homoserine kinase subfamily.

It is found in the cytoplasm. It catalyses the reaction L-homoserine + ATP = O-phospho-L-homoserine + ADP + H(+). It participates in amino-acid biosynthesis; L-threonine biosynthesis; L-threonine from L-aspartate: step 4/5. Its function is as follows. Catalyzes the ATP-dependent phosphorylation of L-homoserine to L-homoserine phosphate. This Enterococcus faecalis (strain ATCC 700802 / V583) protein is Homoserine kinase.